We begin with the raw amino-acid sequence, 185 residues long: Ribosome-recycling factor (185 aa).

It belongs to the RRF family.

The protein resides in the cytoplasm. Functionally, responsible for the release of ribosomes from messenger RNA at the termination of protein biosynthesis. May increase the efficiency of translation by recycling ribosomes from one round of translation to another. This Nitrosospira multiformis (strain ATCC 25196 / NCIMB 11849 / C 71) protein is Ribosome-recycling factor.